We begin with the raw amino-acid sequence, 778 residues long: Subtilisin-like protease SBT5.4 (778 aa).

Positions 1–35 (MSMTRRYSSTQYSNKMSLQSLSSLLLLVTLFFSPA) are cleaved as a signal peptide. The 86-residue stretch at 41 to 126 (SYIVYLGSHA…VFPNKGRKLH (86 aa)) folds into the Inhibitor I9 domain. Residues 130–634 (SWNFMLLAKN…SGHVQPNKAA (505 aa)) form the Peptidase S8 domain. The active-site Charge relay system is Asp163. The N-linked (GlcNAc...) asparagine glycan is linked to Asn218. His230 serves as the catalytic Charge relay system. N-linked (GlcNAc...) asparagine glycans are attached at residues Asn253 and Asn404. Positions 401–486 (ANGNVTDALL…KDGETLFSYL (86 aa)) constitute a PA domain. The active-site Charge relay system is Ser567. N-linked (GlcNAc...) asparagine glycosylation is found at Asn657, Asn690, and Asn732.

This sequence belongs to the peptidase S8 family. In terms of tissue distribution, expressed in the vasculature of roots and leaves, stomata, sepals, stigma, anthers and siliques.

It is found in the endoplasmic reticulum. The protein localises to the cell membrane. Serine protease. Has a substrate preference for the hydrophobic residues Phe and Ala and the basic residue Asp in the P1 position, and for Asp, Leu or Ala in the P1' position. Interferes with CLAVATA 3 (CLV3) signaling, but does not cleave CLV3. This chain is Subtilisin-like protease SBT5.4, found in Arabidopsis thaliana (Mouse-ear cress).